The primary structure comprises 336 residues: Poly(A) RNA polymerase cid12 (336 aa).

Mg(2+) is bound by residues Asp-77 and Asp-79. One can recognise a PAP-associated domain in the interval 209–263 (ALLQKFFYFWGVEWTYELFVLRPLTGQIVPKLQKGWLNEVQPNLLSIEDPIDRNN). Phosphoserine is present on Ser-325. The residue at position 327 (Thr-327) is a Phosphothreonine. Phosphoserine is present on Ser-329.

This sequence belongs to the DNA polymerase type-B-like family. Cid12, hrr1 and rdp1 interact forming the RNA-directed RNA polymerase complex (RDRC). The RDRC complex interacts with the RITS complex via interaction between ago1 and hrr1. Clr4 has a role in mediating this interaction. It depends on Mg(2+) as a cofactor. Mn(2+) is required as a cofactor.

It localises to the cytoplasm. The protein localises to the nucleus. The catalysed reaction is RNA(n) + ATP = RNA(n)-3'-adenine ribonucleotide + diphosphate. Functionally, has a role in the RNA interference (RNAi) pathway which is important for heterochromatin formation and accurate chromosome segregation. A member of the RNA-directed RNA polymerase complex (RDRC) which is involved in the generation of small interfering RNAs (siRNAs) and mediate their association with the RNA-induced transcriptional silencing (RITS) complex. RITS acts as a priming complex for dsRNA synthesis at the site of non-coding centromeric RNA. This chain is Poly(A) RNA polymerase cid12 (cid12), found in Schizosaccharomyces pombe (strain 972 / ATCC 24843) (Fission yeast).